Consider the following 119-residue polypeptide: uncharacterized protein (119 aa).

C13 is a catalytic residue.

This sequence belongs to the ArsC family.

This is an uncharacterized protein from Escherichia coli (strain K12).